The chain runs to 418 residues: MAPTQGPRAPLEFGGPLGAAALLLLLPATMFHLLLAARSGPARLLGPPASLPGLEVLWSPRALLLWLAWLGLQAALYLLPARKVAEGQELKDKSRLRYPINGFQALVLTALLVGLGMSAGLPLGALPEMLLPLAFVATLTAFIFSLFLYMKAQVAPVSALAPGGNSGNPIYDFFLGRELNPRICFFDFKYFCELRPGLIGWVLINLALLMKEAELRGSPSLAMWLVNGFQLLYVGDALWHEEAVLTTMDITHDGFGFMLAFGDMAWVPFTYSLQAQFLLHHPQPLGLPMASVICLINATGYYIFRGANSQKNTFRKNPSDPRVAGLETISTATGRKLLVSGWWGMVRHPNYLGDLIMALAWSLPCGVSHLLPYFYLLYFTALLVHREARDERQCLQKYGLAWQEYCRRVPYRIMPYIY.

6 consecutive transmembrane segments (helical) span residues 13–35 (FGGP…HLLL), 62–81 (ALLL…LLPA), 102–124 (GFQA…LPLG), 129–148 (MLLP…SLFL), 255–277 (FGFM…QAQF), and 287–304 (LPMA…YYIF). Residues Lys311, Arg315, Leu338, Trp343, and 350 to 351 (NY) each bind NADP(+). A helical membrane pass occupies residues 355-377 (LIMALAWSLPCGVSHLLPYFYLL). NADP(+) is bound by residues Asp390, 394–398 (CLQKY), and Tyr405.

The protein belongs to the ERG4/ERG24 family. As to expression, expressed in adult heart, brain, pancreas, lung, liver, skeletal muscle, kidney, ovary, prostate, testis and adrenal gland, but not detected in placenta, spleen, thymus, small intestine, colon (mucosal lining), or peripheral blood leukocytes.

It localises to the microsome membrane. It is found in the endoplasmic reticulum membrane. The enzyme catalyses 4,4-dimethyl-5alpha-cholesta-8,24-dien-3beta-ol + NADP(+) = 4,4-dimethyl-5alpha-cholesta-8,14,24-trien-3beta-ol + NADPH + H(+). It catalyses the reaction 5alpha-cholest-8,14-dien-3beta-ol + NADPH + H(+) = 5alpha-cholest-8-en-3beta-ol + NADP(+). The catalysed reaction is 4,4-dimethyl-8,14-cholestadien-3beta-ol + NADPH + H(+) = 4,4-dimethyl-5alpha-cholest-8-en-3beta-ol + NADP(+). The protein operates within steroid biosynthesis; cholesterol biosynthesis. Functionally, catalyzes the reduction of the C14-unsaturated bond of lanosterol, as part of the metabolic pathway leading to cholesterol biosynthesis. The polypeptide is Delta(14)-sterol reductase TM7SF2 (TM7SF2) (Homo sapiens (Human)).